Consider the following 165-residue polypeptide: Nucleotide-binding protein Suden_0039 (165 aa).

This sequence belongs to the YajQ family.

In terms of biological role, nucleotide-binding protein. This is Nucleotide-binding protein Suden_0039 from Sulfurimonas denitrificans (strain ATCC 33889 / DSM 1251) (Thiomicrospira denitrificans (strain ATCC 33889 / DSM 1251)).